A 697-amino-acid chain; its full sequence is Glycine--tRNA ligase beta subunit (697 aa).

This sequence belongs to the class-II aminoacyl-tRNA synthetase family. In terms of assembly, tetramer of two alpha and two beta subunits.

It is found in the cytoplasm. The enzyme catalyses tRNA(Gly) + glycine + ATP = glycyl-tRNA(Gly) + AMP + diphosphate. This Cereibacter sphaeroides (strain ATCC 17029 / ATH 2.4.9) (Rhodobacter sphaeroides) protein is Glycine--tRNA ligase beta subunit.